The primary structure comprises 76 residues: UPF0346 protein LBUL_1194 (76 aa).

Belongs to the UPF0346 family.

This is UPF0346 protein LBUL_1194 from Lactobacillus delbrueckii subsp. bulgaricus (strain ATCC BAA-365 / Lb-18).